We begin with the raw amino-acid sequence, 144 residues long: Putative pre-16S rRNA nuclease (144 aa).

It belongs to the YqgF nuclease family.

It is found in the cytoplasm. Could be a nuclease involved in processing of the 5'-end of pre-16S rRNA. The sequence is that of Putative pre-16S rRNA nuclease from Pseudomonas aeruginosa (strain LESB58).